The chain runs to 130 residues: Interferon alpha-inducible protein 27-like protein 2 (130 aa).

3 consecutive transmembrane segments (helical) span residues 8–28 (AAVG…AMGF), 43–63 (MSAA…VATL), and 66–86 (VGAA…GSVL). Positions 93–130 (SPSSSLPAEPEAKEDEARENVPQGEPPKPPLKSEKHEE) are disordered.

The protein belongs to the IFI6/IFI27 family.

The protein resides in the mitochondrion membrane. Plays a role in the apoptotic process and has a pro-apoptotic activity. The sequence is that of Interferon alpha-inducible protein 27-like protein 2 from Homo sapiens (Human).